The following is a 145-amino-acid chain: Acidic phospholipase A2 (145 aa).

Residues 1–21 (MYPAHLLVLLAVCVSLLGAAS) form the signal peptide. A propeptide spanning residues 22–27 (IPPLPL) is cleaved from the precursor. 7 disulfides stabilise this stretch: cysteine 38–cysteine 98, cysteine 54–cysteine 144, cysteine 56–cysteine 72, cysteine 71–cysteine 125, cysteine 78–cysteine 118, cysteine 87–cysteine 111, and cysteine 105–cysteine 116. Residues tyrosine 55 and glycine 57 each coordinate Ca(2+). Histidine 75 is an active-site residue. Residue aspartate 76 participates in Ca(2+) binding. Aspartate 119 is an active-site residue.

This sequence belongs to the phospholipase A2 family. Group I subfamily. D49 sub-subfamily. The cofactor is Ca(2+). Expressed by the venom gland.

The protein resides in the secreted. It catalyses the reaction a 1,2-diacyl-sn-glycero-3-phosphocholine + H2O = a 1-acyl-sn-glycero-3-phosphocholine + a fatty acid + H(+). Functionally, PLA2 catalyzes the calcium-dependent hydrolysis of the 2-acyl groups in 3-sn-phosphoglycerides. The polypeptide is Acidic phospholipase A2 (Notechis scutatus scutatus (Mainland tiger snake)).